We begin with the raw amino-acid sequence, 253 residues long: Homeobox protein EMX2 (253 aa).

Residues 155 to 214 (PKRIRTAFSPSQLLRLEHAFEKNHYVVGAERKQLAHSLSLTETQVKVWFQNRRTKFKRQK) constitute a DNA-binding region (homeobox). The tract at residues 213 to 253 (QKLEEEGSDSQQKKKGTHHINRWRIATKQASPEEIDVTSDD) is disordered. The span at 225–234 (KKKGTHHINR) shows a compositional bias: basic residues.

It belongs to the EMX homeobox family. In terms of assembly, interacts with translation initiation factor EIF4E.

The protein localises to the nucleus. The protein resides in the cell projection. It is found in the axon. In terms of biological role, transcription factor, which in cooperation with EMX1, acts to generate the boundary between the roof and archipallium in the developing brain. May function in combination with OTX1/2 to specify cell fates in the developing central nervous system. In the inner ear, it controls the distribution of GPR156 at hair cell boundaries, and regulates the organization of stereociliary bundles in opposite orientations across the line of polarity reversal (LPR). The chain is Homeobox protein EMX2 (EMX2) from Bos taurus (Bovine).